The sequence spans 528 residues: T-complex protein 1 subunit gamma (528 aa).

At serine 250 the chain carries Phosphoserine. The cysteines at positions 364 and 370 are disulfide-linked.

This sequence belongs to the TCP-1 chaperonin family. In terms of assembly, heterooligomeric complex of about 850 to 900 kDa that forms two stacked rings, 12 to 16 nm in diameter.

The protein resides in the cytoplasm. Its function is as follows. Molecular chaperone; assists the folding of proteins upon ATP hydrolysis. Known to play a role, in vitro, in the folding of actin and tubulin. This is T-complex protein 1 subunit gamma (cct3) from Schizosaccharomyces pombe (strain 972 / ATCC 24843) (Fission yeast).